The following is a 312-amino-acid chain: Very-long-chain 3-oxoacyl-CoA reductase (312 aa).

Residues 4-24 traverse the membrane as a helical segment; the sequence is ALPAAGFLYWVGASTVAYLAL. 50 to 79 is an NADP(+) binding site; the sequence is GEWAVVTGGTDGIGKSYAEELAKRGMKIVL. Helical transmembrane passes span 182–202 and 271–291; these read GAIL…LTIY and GYPI…WLYF. A substrate-binding site is contributed by Ser-189. Residue Tyr-202 is the Proton acceptor of the active site. The short motif at 308–312 is the Di-lysine motif element; sequence KMKMN.

Belongs to the short-chain dehydrogenases/reductases (SDR) family. 17-beta-HSD 3 subfamily.

The protein resides in the endoplasmic reticulum membrane. The catalysed reaction is a very-long-chain (3R)-3-hydroxyacyl-CoA + NADP(+) = a very-long-chain 3-oxoacyl-CoA + NADPH + H(+). It catalyses the reaction 17beta-estradiol + NAD(+) = estrone + NADH + H(+). The enzyme catalyses 17beta-estradiol + NADP(+) = estrone + NADPH + H(+). It carries out the reaction 3-oxooctadecanoyl-CoA + NADPH + H(+) = (3R)-hydroxyoctadecanoyl-CoA + NADP(+). The catalysed reaction is (7Z,10Z,13Z,16Z)-3-oxodocosatetraenoyl-CoA + NADPH + H(+) = (3R)-hydroxy-(7Z,10Z,13Z,16Z)-docosatetraenoyl-CoA + NADP(+). It catalyses the reaction 3-oxo-(7Z,10Z,13Z,16Z,19Z)-docosapentaenoyl-CoA + NADPH + H(+) = (3R)-hydroxy-(7Z,10Z,13Z,16Z,19Z)-docosapentaenoyl-CoA + NADP(+). The enzyme catalyses (8Z,11Z,14Z)-3-oxoeicosatrienoyl-CoA + NADPH + H(+) = (3R)-hydroxy-(8Z,11Z,14Z)-eicosatrienoyl-CoA + NADP(+). It participates in lipid metabolism; fatty acid biosynthesis. Its pathway is steroid biosynthesis; estrogen biosynthesis. Functionally, catalyzes the second of the four reactions of the long-chain fatty acids elongation cycle. This endoplasmic reticulum-bound enzymatic process, allows the addition of two carbons to the chain of long- and very long-chain fatty acids/VLCFAs per cycle. This enzyme has a 3-ketoacyl-CoA reductase activity, reducing 3-ketoacyl-CoA to 3-hydroxyacyl-CoA, within each cycle of fatty acid elongation. Thereby, it may participate in the production of VLCFAs of different chain lengths that are involved in multiple biological processes as precursors of membrane lipids and lipid mediators. May also catalyze the transformation of estrone (E1) into estradiol (E2) and play a role in estrogen formation. The sequence is that of Very-long-chain 3-oxoacyl-CoA reductase (HSD17B12) from Bos taurus (Bovine).